Consider the following 515-residue polypeptide: Maturase K (515 aa).

Belongs to the intron maturase 2 family. MatK subfamily.

It is found in the plastid. Its subcellular location is the chloroplast. Functionally, usually encoded in the trnK tRNA gene intron. Probably assists in splicing its own and other chloroplast group II introns. This Pinus banksiana (Jack pine) protein is Maturase K.